The primary structure comprises 399 residues: Glycosyltransferase BC10 (399 aa).

Over 1 to 17 the chain is Cytoplasmic; that stretch reads MKPPRRWMYGRGGGKGK. The helical; Signal-anchor for type II membrane protein transmembrane segment at 18–38 threads the bilayer; the sequence is PAGLLLLGVFLCLSVVLLLLL. The Lumenal segment spans residues 39–399; sequence HGSSPSLEGE…LIAANGASTM (361 aa). Asn-142 and Asn-188 each carry an N-linked (GlcNAc...) asparagine glycan.

It belongs to the glycosyltransferase 14 family. As to expression, expressed in roots, culms, leaves and panicles. Expressed in vascular bundles of leaf sheaths and stems where sclerenchyma cells are developing. Expressed in mechanical tissues of young organs, such as young leaf sheaths, stems and tiller buds.

Its subcellular location is the membrane. In terms of biological role, glycosyltransferase required for the regulation of cellulose biosynthesis in the cell wall. Required for the biosynthesis of hexoses (glucose, mannose and galactose) in both cellulosic and non-cellulosic (pectins and hemicelluloses) components of cell walls. Required for the formation of arabinogalactan proteins which contribute to the strengthening of cell walls. Possesses low glycosyltransferase activity. The sequence is that of Glycosyltransferase BC10 from Oryza sativa subsp. japonica (Rice).